Consider the following 123-residue polypeptide: U11/U12 small nuclear ribonucleoprotein 25 kDa protein (123 aa).

A Ubiquitin-like domain is found at 32-123; the sequence is MTVRVCKMDG…VSFIKKLRQK (92 aa).

Component of the U11/U12 snRNPs that are part of the U12-type spliceosome.

It localises to the nucleus. This is U11/U12 small nuclear ribonucleoprotein 25 kDa protein (SNRNP25) from Bos taurus (Bovine).